The sequence spans 408 residues: LL-diaminopimelate aminotransferase (408 aa).

Substrate contacts are provided by tyrosine 15 and glycine 42. Pyridoxal 5'-phosphate is bound by residues tyrosine 72, 108–109, tyrosine 132, asparagine 187, tyrosine 218, and 246–248; these read SK and SFS. Positions 109, 132, and 187 each coordinate substrate. The residue at position 249 (lysine 249) is an N6-(pyridoxal phosphate)lysine. Arginine 257 and asparagine 292 together coordinate pyridoxal 5'-phosphate. Substrate is bound by residues asparagine 292 and arginine 388.

The protein belongs to the class-I pyridoxal-phosphate-dependent aminotransferase family. LL-diaminopimelate aminotransferase subfamily. As to quaternary structure, homodimer. Requires pyridoxal 5'-phosphate as cofactor.

It carries out the reaction (2S,6S)-2,6-diaminopimelate + 2-oxoglutarate = (S)-2,3,4,5-tetrahydrodipicolinate + L-glutamate + H2O + H(+). The protein operates within amino-acid biosynthesis; L-lysine biosynthesis via DAP pathway; LL-2,6-diaminopimelate from (S)-tetrahydrodipicolinate (aminotransferase route): step 1/1. Functionally, involved in the synthesis of meso-diaminopimelate (m-DAP or DL-DAP), required for both lysine and peptidoglycan biosynthesis. Catalyzes the direct conversion of tetrahydrodipicolinate to LL-diaminopimelate. This chain is LL-diaminopimelate aminotransferase, found in Prochlorococcus marinus (strain MIT 9211).